Reading from the N-terminus, the 252-residue chain is Probable aquaporin TIP1-2 (252 aa).

A run of 2 helical transmembrane segments spans residues 24-44 (VAEFISMLIFVFAGSGSGMAF) and 57-77 (GLIAASLAHALALFVAVAVGA). Positions 85–87 (NPA) match the NPA 1 motif. Helical transmembrane passes span 115-137 (VVACLLLKIATGGAAVGAFSLSA), 144-164 (AVVFEIVMTFGLVYTVYATAV), and 173-193 (VIAPIAIGFIVGANILAGGAF). The NPA 2 signature appears at 199 to 201 (NPA). A helical membrane pass occupies residues 220 to 240 (WLGPFVGAAIAALIYDIIFIG).

The protein belongs to the MIP/aquaporin (TC 1.A.8) family. TIP (TC 1.A.8.10) subfamily. Expressed in leaves.

Its subcellular location is the vacuole membrane. In terms of biological role, aquaporins facilitate the transport of water and small neutral solutes across cell membranes. May be involved in transport from the vacuolar compartment to the cytoplasm. The polypeptide is Probable aquaporin TIP1-2 (TIP1-2) (Oryza sativa subsp. japonica (Rice)).